Reading from the N-terminus, the 138-residue chain is Large ribosomal subunit protein uL16 (138 aa).

A compositionally biased stretch (basic residues) spans 1 to 13; sequence MLQPKRRKYRKEQ. Residues 1–22 are disordered; sequence MLQPKRRKYRKEQKGRNTGVAT.

The protein belongs to the universal ribosomal protein uL16 family. As to quaternary structure, part of the 50S ribosomal subunit.

Binds 23S rRNA and is also seen to make contacts with the A and possibly P site tRNAs. In Paraburkholderia phymatum (strain DSM 17167 / CIP 108236 / LMG 21445 / STM815) (Burkholderia phymatum), this protein is Large ribosomal subunit protein uL16.